Here is an 84-residue protein sequence, read N- to C-terminus: Small ribosomal subunit protein bS20 (84 aa).

The disordered stretch occupies residues 1 to 25; it reads MANIVSNEKTYRHTQKVRKENHAKM.

It belongs to the bacterial ribosomal protein bS20 family.

Functionally, binds directly to 16S ribosomal RNA. This is Small ribosomal subunit protein bS20 from Ureaplasma urealyticum serovar 10 (strain ATCC 33699 / Western).